We begin with the raw amino-acid sequence, 992 residues long: Disks large-associated protein 4 (992 aa).

Over residues 1 to 20 (MKGLGDSRPRHLSDSLDPPH) the composition is skewed to basic and acidic residues. Disordered stretches follow at residues 1–31 (MKGL…DRNP) and 157–225 (MEGT…PASG). Residues 162 to 171 (GKVGGNGSKK) show a composition bias toward gly residues. Positions 172 to 194 (GGLEDGKGRRAKSKERAKAGEPK) are enriched in basic and acidic residues. The segment covering 199–208 (SNISGWWSSD) has biased composition (polar residues). Phosphoserine occurs at positions 206 and 207. At Arg-290 the chain carries Omega-N-methylarginine. A disordered region spans residues 342-396 (TTLLSPRDMDSTAEGPIPCRRMRSGSYIKAMGDEDSDESGGGSPKPSPKTAARRQ). A phosphoserine mark is found at Ser-377, Ser-380, Ser-384, Ser-388, Ser-405, Ser-415, and Ser-421. Disordered stretches follow at residues 527–751 (SVSL…GPRQ), 763–798 (SYGD…AQPG), and 915–992 (TPEK…QTRL). The segment covering 528–554 (VSLQSLSPPPSTGSLSNSRTLPSSSCL) has biased composition (low complexity). Polar residues predominate over residues 576-591 (VTVQSSTESAQDTYLD). 6 positions are modified to phosphoserine: Ser-580, Ser-581, Ser-609, Ser-611, Ser-665, and Ser-744. Residues 600-620 (TSQSGLSNSSDSLDSSTRPPS) show a composition bias toward low complexity. Position 915 is a phosphothreonine (Thr-915). 2 stretches are compositionally biased toward basic and acidic residues: residues 915–925 (TPEKRKEEKKP) and 940–958 (VSRD…EARK). Polar residues predominate over residues 969-978 (VRQNSATESA). The residue at position 973 (Ser-973) is a Phosphoserine.

This sequence belongs to the SAPAP family. In terms of assembly, interacts with DLG1 and DLG4/PSD-95.

The protein resides in the membrane. Its function is as follows. May play a role in the molecular organization of synapses and neuronal cell signaling. Could be an adapter protein linking ion channel to the subsynaptic cytoskeleton. May induce enrichment of PSD-95/SAP90 at the plasma membrane. In Mus musculus (Mouse), this protein is Disks large-associated protein 4 (Dlgap4).